Here is a 337-residue protein sequence, read N- to C-terminus: MGFLRRQLREQFEKKKPEALQADIRMISGCQDVQTSADVSNVSSFQLPDPAGNAGGACTSTLLNVLYKDHQTPEDTMSFVELLNKMRENLEAKGFSQVPQLTASHPIDVNDDFDLVPPAATGTRRALLIGINYVGHEQGVLRGCHNDVKNMVEYIKAVHGFEDENITILMDDGEHTAPTHANMIAAYKKIVALSKADDALFCHFSGHGAKIRDDDRGEEDDGYDETLVPIDYHENGMIRDDDLYDILIKPLVQGVHLVCLMDCCHSGTVLDLPYVYKADGNFTEMEIDENFDFKKLLGKFGIDDFDKFGGEALGKINGDALGKVGKDALGKLNKFFG.

2 propeptides span residues Met-1–Arg-6 and Val-116–Arg-125. Cys-202 bears the Cysteine sulfenic acid (-SOH) mark. A disulfide bond links Cys-202 and Cys-259. His-207 is an active-site residue. Ca(2+) is bound by residues Asp-224, Asp-240, and Asp-241. Cys-264 is an active-site residue. Asp-271 lines the Ca(2+) pocket. A propeptide spanning residues Asn-290–Gly-337 is cleaved from the precursor.

Belongs to the peptidase C14B family. Auto-proteolytic cleavage into a large and a small subunit which probably remain associated by non-covalent bonds. In terms of processing, following oxidative stress, the oxidation of Cys-202 leads to the formation of a disulfide bond between Cys-202 and Cys-259 which enhances catalytic activity.

Activated by Ca(2+). In terms of biological role, cysteine protease that cleaves specifically after arginine residues. The protein is Metacaspase III c of Phaeodactylum tricornutum (strain CCAP 1055/1).